A 141-amino-acid polypeptide reads, in one-letter code: MAKKVTGMIKLQLQAGKATPAPPVGPALGQHGVNIMGFCKEFNAKTANQAGLIIPVVITVYQDRSFSFILKTPPAAVLIKKELGLESGSGVPNRTKVGSLTKEQVKKIAETKMPDLNAASIETAMKMIEGTARSMGVTIQE.

Belongs to the universal ribosomal protein uL11 family. In terms of assembly, part of the ribosomal stalk of the 50S ribosomal subunit. Interacts with L10 and the large rRNA to form the base of the stalk. L10 forms an elongated spine to which L12 dimers bind in a sequential fashion forming a multimeric L10(L12)X complex. One or more lysine residues are methylated.

Functionally, forms part of the ribosomal stalk which helps the ribosome interact with GTP-bound translation factors. The polypeptide is Large ribosomal subunit protein uL11 (Clostridium botulinum (strain Alaska E43 / Type E3)).